The chain runs to 196 residues: uncharacterized protein (196 aa).

The chain crosses the membrane as a helical span at residues 26 to 46 (ITFFFILLICFICILLLLAIF).

The protein resides in the membrane. This is an uncharacterized protein from Mus musculus (Mouse).